The following is a 523-amino-acid chain: Synaptotagmin-10 (523 aa).

The Vesicular portion of the chain corresponds to 1-55; the sequence is MSFHKEDGVNSLCQKALHIVTELCFAGQVEWEKCSGIFPRDRGSQGGSSTDISVS. The tract at residues 13–35 is cysteine motif; that stretch reads CQKALHIVTELCFAGQVEWEKCS. Residues 56-76 form a helical membrane-spanning segment; sequence LLAVVVSFCGLALLVVSLFVF. Topologically, residues 77–523 are cytoplasmic; the sequence is WKLCWPCWKS…CPSPKPPSTP (447 aa). The residue at position 136 (Thr136) is a Phosphothreonine. C2 domains lie at 231 to 352 and 363 to 496; these read ICGK…TVWK and DLGE…THWH. Residues Asp262, Asp268, Asp320, Phe321, Asp322, Ser325, Asp328, Asp394, Asp400, Asp454, and Asp456 each contribute to the Ca(2+) site.

The protein belongs to the synaptotagmin family. Homodimer; disulfide-linked via the cysteine motif. Can also form heterodimers with SYT3, SYT6, SYT7 and SYT9. Ca(2+) serves as cofactor.

It localises to the cytoplasmic vesicle. Its subcellular location is the secretory vesicle membrane. Ca(2+) sensor specifically required for the Ca(2+)-dependent exocytosis of secretory vesicles containing IGF1 in neurons of the olfactory bulb. Exocytosis of IGF1 is required for sensory perception of smell. Not involved in Ca(2+)-dependent synaptic vesicle exocytosis. Acts through Ca(2+) and phospholipid binding to the C2 domain: Ca(2+) induces binding of the C2-domains to phospholipid membranes and to assembled SNARE-complexes; both actions contribute to triggering exocytosis. This is Synaptotagmin-10 (SYT10) from Pongo abelii (Sumatran orangutan).